A 1463-amino-acid polypeptide reads, in one-letter code: Probable oxidoreductase PXDNL (1463 aa).

Residues 1–23 form the signal peptide; it reads MEPRLFCWTTLFLLAGWCLPGLP. The region spanning 24-50 is the LRRNT domain; the sequence is CPSRCLCFKSTVRCMHLMLDHIPQVPQ. LRR repeat units follow at residues 51–72, 75–96, 99–120, 123–144, and 147–168; these read QTTVLDLRFNRIREIPGSAFKK, NLNTLLLNNNHIRKISRNAFEG, NLLYLYLYKNEIHALDKQTFKG, SLEHLYIHFNQLEMLQPETFGD, and RLERLFLHNNKLSKIPAGSFSN. The 54-residue stretch at 180–233 folds into the LRRCT domain; the sequence is NALVCDCDLMWLGELLQGFAQHGHTQAAATCEYPRRLHGRAVASVTVEEFNCQS. Ig-like C2-type domains follow at residues 234–322, 330–414, 419–504, and 507–596; these read PRIT…AMLR, PSFV…ANII, PQFT…VQLT, and PKAL…MFLT. 5 disulfides stabilise this stretch: C255–C305, C351–C398, C440–C488, C532–C580, and C718–C734. N387 is a glycosylation site (N-linked (GlcNAc...) asparagine). The active-site Proton acceptor is H812. Ca(2+) is bound at residue D813. 2 cysteine pairs are disulfide-bonded: C832–C842 and C836–C859. Residues T891, Y893, D895, and S897 each contribute to the Ca(2+) site. A disulfide bond links C944 and C953. H1057 contributes to the heme b binding site. 2 cysteine pairs are disulfide-bonded: C1160–C1217 and C1258–C1284. A VWFC domain is found at 1393 to 1451; that stretch reads AGCTDVRGVPRKAEERWMKEDCTHCICESGQVTCVVEICPPAPCPSPELVKGTCCPVCR.

It belongs to the peroxidase family. XPO subfamily. As to quaternary structure, interacts with PXDN; this interaction inhibits the peroxidase activity of PXDN. Heme b serves as cofactor. Post-translationally, phosphorylation by SRC on tyrosine residues is required for targeting to polysomes. As to expression, the 57 kDa isoform PMR1 is the only form detected at protein levels in human cell lines. Expressed in heart.

The protein localises to the secreted. Its subcellular location is the endoplasmic reticulum. The protein resides in the cell membrane. It is found in the cytoplasm. Its function is as follows. Probable oxidoreductase. Lacks peroxidase activity. Inhibits the peroxidase activity of PXDN through its interaction. In terms of biological role, endonuclease selectively degrading some target mRNAs while they are engaged by translating ribosomes, among which albumin and beta-globin mRNAs. The polypeptide is Probable oxidoreductase PXDNL (Homo sapiens (Human)).